Here is a 125-residue protein sequence, read N- to C-terminus: Desulfoferrodoxin homolog (125 aa).

Fe cation is bound by residues cysteine 10, cysteine 13, cysteine 29, cysteine 30, histidine 49, histidine 69, histidine 75, cysteine 116, and histidine 119.

This sequence belongs to the desulfoferrodoxin family. It depends on Fe(3+) as a cofactor. Cu(2+) is required as a cofactor.

The polypeptide is Desulfoferrodoxin homolog (Archaeoglobus fulgidus (strain ATCC 49558 / DSM 4304 / JCM 9628 / NBRC 100126 / VC-16)).